The following is a 785-amino-acid chain: E3 UFM1-protein ligase 1 homolog (785 aa).

Residues M396 to D416 are compositionally biased toward basic and acidic residues. Residues M396 to K473 are disordered. Over residues K439–R449 the composition is skewed to basic residues.

Belongs to the UFL1 family.

Functionally, E3 UFM1-protein ligase that mediates ufmylation of target proteins. In Culex quinquefasciatus (Southern house mosquito), this protein is E3 UFM1-protein ligase 1 homolog.